We begin with the raw amino-acid sequence, 430 residues long: Phosphomethylpyrimidine synthase (430 aa).

Residues N67, M96, Y125, H161, 183 to 185 (SRG), 224 to 227 (DALR), and E263 contribute to the substrate site. H267 lines the Zn(2+) pocket. A substrate-binding site is contributed by Y290. H331 provides a ligand contact to Zn(2+). [4Fe-4S] cluster-binding residues include C406, C409, and C413.

The protein belongs to the ThiC family. As to quaternary structure, homodimer. [4Fe-4S] cluster is required as a cofactor.

The catalysed reaction is 5-amino-1-(5-phospho-beta-D-ribosyl)imidazole + S-adenosyl-L-methionine = 4-amino-2-methyl-5-(phosphooxymethyl)pyrimidine + CO + 5'-deoxyadenosine + formate + L-methionine + 3 H(+). The protein operates within cofactor biosynthesis; thiamine diphosphate biosynthesis. In terms of biological role, catalyzes the synthesis of the hydroxymethylpyrimidine phosphate (HMP-P) moiety of thiamine from aminoimidazole ribotide (AIR) in a radical S-adenosyl-L-methionine (SAM)-dependent reaction. The chain is Phosphomethylpyrimidine synthase from Campylobacter jejuni (strain RM1221).